The chain runs to 352 residues: N-acetyl-gamma-glutamyl-phosphate reductase (352 aa).

Cys-156 is an active-site residue.

The protein belongs to the NAGSA dehydrogenase family. Type 1 subfamily.

The protein localises to the cytoplasm. It carries out the reaction N-acetyl-L-glutamate 5-semialdehyde + phosphate + NADP(+) = N-acetyl-L-glutamyl 5-phosphate + NADPH + H(+). Its pathway is amino-acid biosynthesis; L-arginine biosynthesis; N(2)-acetyl-L-ornithine from L-glutamate: step 3/4. In terms of biological role, catalyzes the NADPH-dependent reduction of N-acetyl-5-glutamyl phosphate to yield N-acetyl-L-glutamate 5-semialdehyde. This chain is N-acetyl-gamma-glutamyl-phosphate reductase, found in Afipia carboxidovorans (strain ATCC 49405 / DSM 1227 / KCTC 32145 / OM5) (Oligotropha carboxidovorans).